The chain runs to 180 residues: Large ribosomal subunit protein uL5 (180 aa).

The protein belongs to the universal ribosomal protein uL5 family. In terms of assembly, part of the 50S ribosomal subunit; part of the 5S rRNA/L5/L18/L25 subcomplex. Contacts the 5S rRNA and the P site tRNA. Forms a bridge to the 30S subunit in the 70S ribosome.

Functionally, this is one of the proteins that bind and probably mediate the attachment of the 5S RNA into the large ribosomal subunit, where it forms part of the central protuberance. In the 70S ribosome it contacts protein S13 of the 30S subunit (bridge B1b), connecting the 2 subunits; this bridge is implicated in subunit movement. Contacts the P site tRNA; the 5S rRNA and some of its associated proteins might help stabilize positioning of ribosome-bound tRNAs. The chain is Large ribosomal subunit protein uL5 from Polynucleobacter necessarius subsp. necessarius (strain STIR1).